The following is a 263-amino-acid chain: Hydroxyethylthiazole kinase 1 (263 aa).

A substrate-binding site is contributed by methionine 42. Residues lysine 118 and threonine 164 each coordinate ATP. Glycine 191 contributes to the substrate binding site.

It belongs to the Thz kinase family. Mg(2+) is required as a cofactor.

The enzyme catalyses 5-(2-hydroxyethyl)-4-methylthiazole + ATP = 4-methyl-5-(2-phosphooxyethyl)-thiazole + ADP + H(+). It participates in cofactor biosynthesis; thiamine diphosphate biosynthesis; 4-methyl-5-(2-phosphoethyl)-thiazole from 5-(2-hydroxyethyl)-4-methylthiazole: step 1/1. Its function is as follows. Catalyzes the phosphorylation of the hydroxyl group of 4-methyl-5-beta-hydroxyethylthiazole (THZ). The chain is Hydroxyethylthiazole kinase 1 from Clostridium botulinum (strain Okra / Type B1).